The primary structure comprises 513 residues: Na(+)/H(+) antiporter NhaB (513 aa).

Transmembrane regions (helical) follow at residues 23-43 (LALI…PFVA), 52-72 (IFTL…LLAI), 97-117 (LLLM…LFIF), 120-140 (LLLS…AAAF), 144-164 (FLDA…FYGI), 202-222 (LMMH…VGEP), 238-258 (FFLR…LTCL), 303-323 (AIIG…VGLI), 348-368 (TESL…AVII), 391-411 (LFYI…VGTI), 447-467 (ATPN…APLI), and 475-495 (VWMA…CVEF).

This sequence belongs to the NhaB Na(+)/H(+) (TC 2.A.34) antiporter family.

Its subcellular location is the cell inner membrane. It catalyses the reaction 2 Na(+)(in) + 3 H(+)(out) = 2 Na(+)(out) + 3 H(+)(in). In terms of biological role, na(+)/H(+) antiporter that extrudes sodium in exchange for external protons. The chain is Na(+)/H(+) antiporter NhaB from Escherichia coli (strain 55989 / EAEC).